The following is a 435-amino-acid chain: Probable exopolygalacturonase B (435 aa).

Residues 1–15 (MKFFTAALFASAVSA) form the signal peptide. N-linked (GlcNAc...) asparagine glycosylation is found at asparagine 59, asparagine 184, and asparagine 224. Aspartate 254 functions as the Proton donor in the catalytic mechanism. Cysteine 256 and cysteine 273 are disulfide-bonded. 2 N-linked (GlcNAc...) asparagine glycosylation sites follow: asparagine 262 and asparagine 274. Residue histidine 277 is part of the active site. N-linked (GlcNAc...) asparagine glycans are attached at residues asparagine 301, asparagine 328, asparagine 365, and asparagine 368. The cysteines at positions 391 and 397 are disulfide-linked.

Belongs to the glycosyl hydrolase 28 family.

The protein resides in the secreted. It catalyses the reaction [(1-&gt;4)-alpha-D-galacturonosyl](n) + H2O = alpha-D-galacturonate + [(1-&gt;4)-alpha-D-galacturonosyl](n-1). Its function is as follows. Specific in hydrolyzing the terminal glycosidic bond of polygalacturonic acid and oligogalacturonates. In Aspergillus terreus (strain NIH 2624 / FGSC A1156), this protein is Probable exopolygalacturonase B (pgxB).